Consider the following 368-residue polypeptide: F-box only protein 28 (368 aa).

Basic and acidic residues predominate over residues 1 to 11 (MAAASEERMAE). The segment at 1–57 (MAAASEERMAEEGGGGHGDGGSPSAIASTQRLPPPPPPQPPQPGSQAPPAPALAPDQ) is disordered. A compositionally biased stretch (gly residues) spans 12-21 (EGGGGHGDGG). The span at 32–52 (LPPPPPPQPPQPGSQAPPAPA) shows a compositional bias: pro residues. Residues 61-109 (NNTLVALPIVAIENILSFMSYDEISQLRLVCKRMDLVCQRMLNQGFLKV) enclose the F-box domain. Residues Ser-235 and Ser-242 each carry the phosphoserine modification. A Phosphothreonine modification is found at Thr-270. The disordered stretch occupies residues 328 to 368 (MESAVGNSSGSGQSEESPRKRKKAAEAIDSLRKSKRLRNRK). At Ser-344 the chain carries Phosphoserine.

In terms of assembly, part of a SCF (SKP1-cullin-F-box) protein ligase complex.

Its subcellular location is the chromosome. It is found in the centromere. The protein resides in the kinetochore. Its function is as follows. Probably recognizes and binds to some phosphorylated proteins and promotes their ubiquitination and degradation. The chain is F-box only protein 28 (FBXO28) from Bos taurus (Bovine).